The sequence spans 750 residues: Serine/threonine-protein kinase GE16371 (750 aa).

Doublecortin domains are found at residues leucine 159–asparagine 245 and arginine 315–phenylalanine 398. The 259-residue stretch at tyrosine 479–threonine 737 folds into the Protein kinase domain. ATP is bound by residues isoleucine 485–valine 493 and lysine 508. The Proton acceptor role is filled by aspartate 600.

The protein belongs to the protein kinase superfamily. CAMK Ser/Thr protein kinase family. CaMK subfamily.

It carries out the reaction L-seryl-[protein] + ATP = O-phospho-L-seryl-[protein] + ADP + H(+). The enzyme catalyses L-threonyl-[protein] + ATP = O-phospho-L-threonyl-[protein] + ADP + H(+). The sequence is that of Serine/threonine-protein kinase GE16371 from Drosophila yakuba (Fruit fly).